The sequence spans 105 residues: Chloroacetanilide N-alkylformylase 1, ferredoxin component (105 aa).

Positions proline 2–aspartate 105 constitute a 2Fe-2S ferredoxin-type domain. [2Fe-2S] cluster is bound by residues cysteine 40, cysteine 46, cysteine 49, and cysteine 86.

It belongs to the adrenodoxin/putidaredoxin family. In terms of assembly, the chloroacetanilide N-alkylformylase multicomponent enzyme system is composed of an oxygenase component (CndA) and an electron transfer component formed by a ferredoxin reductase (CndC1) and a ferredoxin (CndB1). In vitro, chloroacetanilide N-alkylformylase assays in which CndB1 is substituted for CndB2 demonstrate that the two enzymes possess nearly identical activities. It depends on [2Fe-2S] cluster as a cofactor.

Component of the chloroacetanilide N-alkylformylase multicomponent enzyme system involved in the degradation of chloroacetanilide herbicides (N-alkoxyalkyl-N-chloroacetyl-substituted aniline derivatives). In vitro, functions as an intermediate electron transfer protein. The chain is Chloroacetanilide N-alkylformylase 1, ferredoxin component from Rhizorhabdus wittichii (strain DC-6 / KACC 16600) (Sphingomonas wittichii).